The primary structure comprises 160 residues: NADH-quinone oxidoreductase subunit I (160 aa).

4Fe-4S ferredoxin-type domains follow at residues 51-80 (RRYKNGEERCIACKLCEVVCPAQAITIEAA) and 91-120 (TKYDIDMTKCIYCGFCQEACPVDAIVEGPN). [4Fe-4S] cluster-binding residues include C60, C63, C66, C70, C100, C103, C106, and C110.

The protein belongs to the complex I 23 kDa subunit family. In terms of assembly, NDH-1 is composed of 14 different subunits. Subunits NuoA, H, J, K, L, M, N constitute the membrane sector of the complex. The cofactor is [4Fe-4S] cluster.

It localises to the cell inner membrane. The enzyme catalyses a quinone + NADH + 5 H(+)(in) = a quinol + NAD(+) + 4 H(+)(out). In terms of biological role, NDH-1 shuttles electrons from NADH, via FMN and iron-sulfur (Fe-S) centers, to quinones in the respiratory chain. The immediate electron acceptor for the enzyme in this species is believed to be ubiquinone. Couples the redox reaction to proton translocation (for every two electrons transferred, four hydrogen ions are translocated across the cytoplasmic membrane), and thus conserves the redox energy in a proton gradient. This is NADH-quinone oxidoreductase subunit I from Neorickettsia sennetsu (strain ATCC VR-367 / Miyayama) (Ehrlichia sennetsu).